The sequence spans 274 residues: 2,3,4,5-tetrahydropyridine-2,6-dicarboxylate N-succinyltransferase (274 aa).

This sequence belongs to the transferase hexapeptide repeat family.

Its subcellular location is the cytoplasm. The enzyme catalyses (S)-2,3,4,5-tetrahydrodipicolinate + succinyl-CoA + H2O = (S)-2-succinylamino-6-oxoheptanedioate + CoA. Its pathway is amino-acid biosynthesis; L-lysine biosynthesis via DAP pathway; LL-2,6-diaminopimelate from (S)-tetrahydrodipicolinate (succinylase route): step 1/3. This is 2,3,4,5-tetrahydropyridine-2,6-dicarboxylate N-succinyltransferase from Shigella boydii serotype 18 (strain CDC 3083-94 / BS512).